The chain runs to 522 residues: tRNA-2-methylthio-N(6)-dimethylallyladenosine synthase (522 aa).

Residues 1–26 show a composition bias toward low complexity; it reads MSLTIPSPASGTSTSATTDTAPAAAP. The tract at residues 1-27 is disordered; sequence MSLTIPSPASGTSTSATTDTAPAAAPQ. Residues 28–143 form the MTTase N-terminal domain; that stretch reads RTYQVRTFGC…LPALLDRARH (116 aa). [4Fe-4S] cluster-binding residues include C37, C72, C106, C180, C184, and C187. Residues 166–396 enclose the Radical SAM core domain; sequence RDSVYSGWVS…TALQDRIAAE (231 aa). The TRAM domain maps to 399–469; the sequence is ARQLGRRVEV…AFHLVADPAS (71 aa). A disordered region spans residues 481-522; it reads GDAWDRSQADSCGAPVAGGGAGSNGGKGGVSLGMPALPVRRS. Over residues 496–511 the composition is skewed to gly residues; that stretch reads VAGGGAGSNGGKGGVS.

This sequence belongs to the methylthiotransferase family. MiaB subfamily. In terms of assembly, monomer. [4Fe-4S] cluster serves as cofactor.

It localises to the cytoplasm. It catalyses the reaction N(6)-dimethylallyladenosine(37) in tRNA + (sulfur carrier)-SH + AH2 + 2 S-adenosyl-L-methionine = 2-methylsulfanyl-N(6)-dimethylallyladenosine(37) in tRNA + (sulfur carrier)-H + 5'-deoxyadenosine + L-methionine + A + S-adenosyl-L-homocysteine + 2 H(+). In terms of biological role, catalyzes the methylthiolation of N6-(dimethylallyl)adenosine (i(6)A), leading to the formation of 2-methylthio-N6-(dimethylallyl)adenosine (ms(2)i(6)A) at position 37 in tRNAs that read codons beginning with uridine. In Arthrobacter sp. (strain FB24), this protein is tRNA-2-methylthio-N(6)-dimethylallyladenosine synthase.